Here is a 616-residue protein sequence, read N- to C-terminus: Homeodomain-interacting protein kinase 4 (616 aa).

The region spanning 11–347 (YDIIEVLGKG…PSAALRHPFV (337 aa)) is the Protein kinase domain. Residues 17–25 (LGKGTFGEV) and Lys-40 contribute to the ATP site. Asp-136 (proton acceptor) is an active-site residue. The interval 487–616 (HKARKAPAGS…SFLQHVGGHH (130 aa)) is disordered. The segment covering 497-512 (KSDSNFSNLIRLSQAS) has biased composition (polar residues). The residue at position 512 (Ser-512) is a Phosphoserine. The span at 542 to 560 (REGDGPGIKDRPMDAERPG) shows a compositional bias: basic and acidic residues.

The protein belongs to the protein kinase superfamily. CMGC Ser/Thr protein kinase family. HIPK subfamily. In terms of processing, autophosphorylated. As to expression, expressed at moderate levels in lung and white adipose tissues and weakly in brain and liver.

It is found in the cytoplasm. It catalyses the reaction L-seryl-[protein] + ATP = O-phospho-L-seryl-[protein] + ADP + H(+). The enzyme catalyses L-threonyl-[protein] + ATP = O-phospho-L-threonyl-[protein] + ADP + H(+). Its function is as follows. Protein kinase that phosphorylates murine TP53 at Ser-9, and thus induces TP53 repression of BIRC5 promoter. May act as a corepressor of transcription factors (Potential). This Mus musculus (Mouse) protein is Homeodomain-interacting protein kinase 4 (Hipk4).